The sequence spans 805 residues: Mitochondrial inner membrane m-AAA protease component AFG3L2 (805 aa).

A mitochondrion-targeting transit peptide spans 1 to 39 (MAHRCLLLWGRGACRPRGMPPMLLPGGRTGSTERLYLRM). The propeptide at 40 to 67 (LYRYATTQAKTSRNSLLTDVIAAYQRLC) is removed in mature form. The tract at residues 74–127 (FEKYFPNGKNGKKTSEPKEVMGEKKEPKPAAAPRPSGGGVGGGGKRGGKKDDSH) is disordered. Residues 86 to 101 (KTSEPKEVMGEKKEPK) show a composition bias toward basic and acidic residues. Residues 109–118 (SGGGVGGGGK) are compositionally biased toward gly residues. Residue lysine 118 is modified to N6-succinyllysine. 2 helical membrane passes run 144–164 (FKMY…YFLF) and 252–272 (GSFL…LYTI). Valine 311, alanine 312, threonine 353, glycine 354, lysine 355, threonine 356, leucine 357, and histidine 491 together coordinate ATP. Residue histidine 575 participates in Zn(2+) binding. The active site involves glutamate 576. Histidine 579 and aspartate 650 together coordinate Zn(2+). Residues 760-805 (FVEGTGSLDEDTSLPEGLKDWNREREGSEEPSGEKVTSPVQGAGPA) form a disordered region. Over residues 776–787 (GLKDWNREREGS) the composition is skewed to basic and acidic residues.

It in the N-terminal section; belongs to the AAA ATPase family. In the C-terminal section; belongs to the peptidase M41 family. Homohexamer. Forms heterohexamers with SPG7. The m-AAA protease is either composed of homohexamers of AFG3L2 or heterohexamers of AFG3L2 and SPG7. Interacts with MAIP1. Interacts with DNAJC19. Interacts with PHB2. The cofactor is Zn(2+). Upon import into the mitochondrion, the N-terminal transit peptide is cleaved to generate an intermediate form which undergoes autocatalytic proteolytic processing to generate the proteolytically active mature form.

The protein resides in the mitochondrion inner membrane. It catalyses the reaction ATP + H2O = ADP + phosphate + H(+). Its function is as follows. Catalytic component of the m-AAA protease, a protease that plays a key role in proteostasis of inner mitochondrial membrane proteins, and which is essential for axonal and neuron development. AFG3L2 possesses both ATPase and protease activities: the ATPase activity is required to unfold substrates, threading them into the internal proteolytic cavity for hydrolysis into small peptide fragments. The m-AAA protease carries out protein quality control in the inner membrane of the mitochondria by mediating degradation of mistranslated or misfolded polypeptides. The m-AAA protease complex also promotes the processing and maturation of mitochondrial proteins, such as MRPL32/bL32m, PINK1 and SP7. Mediates protein maturation of the mitochondrial ribosomal subunit MRPL32/bL32m by catalyzing the cleavage of the presequence of MRPL32/bL32m prior to assembly into the mitochondrial ribosome. Required for SPG7 maturation into its active mature form after SPG7 cleavage by mitochondrial-processing peptidase (MPP). Required for the maturation of PINK1 into its 52kDa mature form after its cleavage by mitochondrial-processing peptidase (MPP). Acts as a regulator of calcium in neurons by mediating degradation of SMDT1/EMRE before its assembly with the uniporter complex, limiting the availability of SMDT1/EMRE for MCU assembly and promoting efficient assembly of gatekeeper subunits with MCU. Promotes the proteolytic degradation of GHITM upon hyperpolarization of mitochondria: progressive GHITM degradation leads to respiratory complex I degradation and broad reshaping of the mitochondrial proteome by AFG3L2. Also acts as a regulator of mitochondrial glutathione homeostasis by mediating cleavage and degradation of SLC25A39. SLC25A39 cleavage is prevented when SLC25A39 binds iron-sulfur. Involved in the regulation of OMA1-dependent processing of OPA1. May act by mediating processing of OMA1 precursor, participating in OMA1 maturation. In Bos taurus (Bovine), this protein is Mitochondrial inner membrane m-AAA protease component AFG3L2 (AFG3L2).